A 1279-amino-acid chain; its full sequence is Myosin-1 (1279 aa).

Residues 1 to 12 (MAIVKRGGRTRA) show a composition bias toward basic residues. Residues 1–25 (MAIVKRGGRTRAKQQQAPAKVNNGL) form a disordered region. A Myosin motor domain is found at 48–736 (VGVSDLTLLS…TLFALEDMRD (689 aa)). ATP is bound at residue 141-148 (GESGAGKT). Serine 371 is subject to Phosphoserine. The interval 419-502 (SIGILDIYGF…PGLFAALNDS (84 aa)) is actin-binding. IQ domains follow at residues 740–760 (HNMA…KEDA) and 761–786 (AKTI…YGNS). One can recognise a TH1 domain in the interval 794–984 (RRRFSMLGSR…SGTVTVNQGL (191 aa)). Polar residues-rich tracts occupy residues 980–989 (VNQGLPPTSK) and 1018–1027 (AFQSQPTASY). Disordered stretches follow at residues 980-1001 (VNQG…LGKV), 1014-1132 (LAQP…PKHP), 1189-1216 (SPSA…SSNT), and 1253-1279 (LADA…DDDW). Composition is skewed to low complexity over residues 1038–1056 (TQLY…PTRT) and 1067–1095 (STQT…KKIA). A compositionally biased stretch (pro residues) spans 1116-1126 (APPPPPPPPAL). Residues 1129-1189 (PKHPTYRAMY…PIDYLQEESS (61 aa)) enclose the SH3 domain. A compositionally biased stretch (polar residues) spans 1189–1209 (SPSASAATQSYAPTTASSNPV). The span at 1268 to 1279 (SDAEDDDDDDDW) shows a compositional bias: acidic residues.

The protein belongs to the TRAFAC class myosin-kinesin ATPase superfamily. Myosin family. Phosphorylation of the TEDS site (Ser-371) is required for the polarization of the actin cytoskeleton. Phosphorylation probably activates the myosin-I ATPase activity.

It is found in the cytoplasm. The protein resides in the cytoskeleton. Its subcellular location is the actin patch. In terms of biological role, type-I myosin implicated in the organization of the actin cytoskeleton. Required for proper actin cytoskeleton polarization. At the cell cortex, assembles in patch-like structures together with proteins from the actin-polymerizing machinery and promotes actin assembly. Functions as actin nucleation-promoting factor (NPF) for the Arp2/3 complex. This chain is Myosin-1 (MYO1), found in Lodderomyces elongisporus (strain ATCC 11503 / CBS 2605 / JCM 1781 / NBRC 1676 / NRRL YB-4239) (Yeast).